A 257-amino-acid chain; its full sequence is Imidazole glycerol phosphate synthase subunit HisF (257 aa).

Catalysis depends on residues D11 and D130.

Belongs to the HisA/HisF family. Heterodimer of HisH and HisF.

It is found in the cytoplasm. It carries out the reaction 5-[(5-phospho-1-deoxy-D-ribulos-1-ylimino)methylamino]-1-(5-phospho-beta-D-ribosyl)imidazole-4-carboxamide + L-glutamine = D-erythro-1-(imidazol-4-yl)glycerol 3-phosphate + 5-amino-1-(5-phospho-beta-D-ribosyl)imidazole-4-carboxamide + L-glutamate + H(+). It functions in the pathway amino-acid biosynthesis; L-histidine biosynthesis; L-histidine from 5-phospho-alpha-D-ribose 1-diphosphate: step 5/9. Functionally, IGPS catalyzes the conversion of PRFAR and glutamine to IGP, AICAR and glutamate. The HisF subunit catalyzes the cyclization activity that produces IGP and AICAR from PRFAR using the ammonia provided by the HisH subunit. The sequence is that of Imidazole glycerol phosphate synthase subunit HisF from Vibrio parahaemolyticus serotype O3:K6 (strain RIMD 2210633).